Here is a 201-residue protein sequence, read N- to C-terminus: Large ribosomal subunit protein uL4 (201 aa).

The interval 44-68 (RAQKSRAEVSGSGRKPWRQKGTGRA) is disordered.

Belongs to the universal ribosomal protein uL4 family. As to quaternary structure, part of the 50S ribosomal subunit.

One of the primary rRNA binding proteins, this protein initially binds near the 5'-end of the 23S rRNA. It is important during the early stages of 50S assembly. It makes multiple contacts with different domains of the 23S rRNA in the assembled 50S subunit and ribosome. In terms of biological role, forms part of the polypeptide exit tunnel. The sequence is that of Large ribosomal subunit protein uL4 from Buchnera aphidicola subsp. Acyrthosiphon pisum (strain APS) (Acyrthosiphon pisum symbiotic bacterium).